Consider the following 646-residue polypeptide: Acetyl-coenzyme A synthetase (646 aa).

Residues 190 to 193 and Thr309 contribute to the CoA site; that span reads RAGK. Residues 385 to 387, 409 to 414, Asp498, and Arg513 each bind ATP; these read GEP and DTWWQT. Ser521 contacts CoA. An ATP-binding site is contributed by Arg524. Positions 535, 537, and 540 each coordinate Mg(2+). Arg582 lines the CoA pocket. Lys607 carries the N6-acetyllysine modification.

This sequence belongs to the ATP-dependent AMP-binding enzyme family. It depends on Mg(2+) as a cofactor. Acetylated. Deacetylation by the SIR2-homolog deacetylase activates the enzyme.

It catalyses the reaction acetate + ATP + CoA = acetyl-CoA + AMP + diphosphate. In terms of biological role, catalyzes the conversion of acetate into acetyl-CoA (AcCoA), an essential intermediate at the junction of anabolic and catabolic pathways. AcsA undergoes a two-step reaction. In the first half reaction, AcsA combines acetate with ATP to form acetyl-adenylate (AcAMP) intermediate. In the second half reaction, it can then transfer the acetyl group from AcAMP to the sulfhydryl group of CoA, forming the product AcCoA. This Pseudoalteromonas atlantica (strain T6c / ATCC BAA-1087) protein is Acetyl-coenzyme A synthetase.